Consider the following 113-residue polypeptide: U11-theraphotoxin-Hhn1q (113 aa).

An N-terminal signal peptide occupies residues 1 to 21; it reads MNTVRVTFLLVFVLAVSLGQA. A propeptide spanning residues 22–74 is cleaved from the precursor; the sequence is DKDENRMEMQEKTEQGKSYLDFAENLLLQKLEELEAKLLEEDSEESRNSRQKR. Positions 61–82 are disordered; it reads EEDSEESRNSRQKRCIGEGVPC. 3 cysteine pairs are disulfide-bonded: C75-C90, C82-C95, and C89-C110.

The protein belongs to the neurotoxin 14 (magi-1) family. 01 (HNTX-16) subfamily. As to expression, expressed by the venom gland.

The protein resides in the secreted. Its function is as follows. Probable ion channel inhibitor. The protein is U11-theraphotoxin-Hhn1q of Cyriopagopus hainanus (Chinese bird spider).